The chain runs to 131 residues: Small ribosomal subunit protein uS8 (131 aa).

Belongs to the universal ribosomal protein uS8 family. In terms of assembly, part of the 30S ribosomal subunit. Contacts proteins S5 and S12.

Functionally, one of the primary rRNA binding proteins, it binds directly to 16S rRNA central domain where it helps coordinate assembly of the platform of the 30S subunit. The protein is Small ribosomal subunit protein uS8 of Alkalilimnicola ehrlichii (strain ATCC BAA-1101 / DSM 17681 / MLHE-1).